Consider the following 320-residue polypeptide: Protoheme IX farnesyltransferase 1 (320 aa).

A run of 9 helical transmembrane segments spans residues 34 to 54, 58 to 78, 112 to 132, 135 to 155, 160 to 180, 189 to 209, 234 to 254, 255 to 275, and 299 to 319; these read GIIISNSIAAFGGFWIAFASA, LTGLAFLMTMVTAMLGTAFVM, AMILTYGSVLGIAGLAMLYSL, LTAFLGLAAFIFYAIIYTVWV, VWSTFVGSFPGAAPPLMGYCA, AVLLYTIMFLWQPPHFWAIGI, IKMMQYIAVLVPVTLLFPFSL, GTGHISPFYFLAALVLGGIWI, and LIYFCLLFFIMMIDSFMMFLI.

This sequence belongs to the UbiA prenyltransferase family. Protoheme IX farnesyltransferase subfamily. In terms of assembly, interacts with CtaA.

The protein resides in the cell membrane. The catalysed reaction is heme b + (2E,6E)-farnesyl diphosphate + H2O = Fe(II)-heme o + diphosphate. It participates in porphyrin-containing compound metabolism; heme O biosynthesis; heme O from protoheme: step 1/1. Its function is as follows. Converts heme B (protoheme IX) to heme O by substitution of the vinyl group on carbon 2 of heme B porphyrin ring with a hydroxyethyl farnesyl side group. The protein is Protoheme IX farnesyltransferase 1 (ctaB1) of Bacillus subtilis (strain 168).